Consider the following 1286-residue polypeptide: Protein patched (1286 aa).

Topologically, residues M1–K76 are cytoplasmic. Residues V77 to L92 form a helical membrane-spanning segment. Residues K93–P427 are Extracellular-facing. N142, N298, N335, and N388 each carry an N-linked (GlcNAc...) asparagine glycan. Residues S428 to L448 form a helical membrane-spanning segment. An SSD domain is found at S428–L583. Residues R449 to V465 lie on the Cytoplasmic side of the membrane. Residues L466–F486 traverse the membrane as a helical segment. Residues N487 to Q492 lie on the Extracellular side of the membrane. The chain crosses the membrane as a helical span at residues V493–A511. Over A512–S532 the chain is Cytoplasmic. The helical transmembrane segment at I533 to P553 threads the bilayer. Residues A554–A562 lie on the Extracellular side of the membrane. The helical transmembrane segment at A563–L583 threads the bilayer. Topologically, residues D584 to S677 are cytoplasmic. Residues W678–T699 traverse the membrane as a helical segment. Residues R700 to G931 lie on the Extracellular side of the membrane. A glycan (N-linked (GlcNAc...) asparagine) is linked at N807. The chain crosses the membrane as a helical span at residues F932–L952. The Cytoplasmic segment spans residues R953–S955. Residues L956 to L976 form a helical membrane-spanning segment. Residues S977–S1007 lie on the Extracellular side of the membrane. The helical transmembrane segment at A1008 to I1028 threads the bilayer. At S1029–H1056 the chain is on the cytoplasmic side. The helical transmembrane segment at G1057–I1077 threads the bilayer. The Extracellular portion of the chain corresponds to R1078 to W1082. A helical membrane pass occupies residues L1083–L1103. The Cytoplasmic portion of the chain corresponds to S1104–S1286. The tract at residues E1116–P1237 is disordered. 2 stretches are compositionally biased toward polar residues: residues V1141–Q1152 and P1165–T1191. The segment covering P1199–Q1216 has biased composition (low complexity). A compositionally biased stretch (pro residues) spans P1224–Y1235.

Belongs to the patched family. In terms of assembly, interacts (via C-terminal cytoplasmic region) with CG5504/l(2)tid; the interaction is probably direct. Interacts with hh/hedgehog.

It is found in the membrane. Its function is as follows. Segmentation polarity protein. Acts as a receptor for the hedgehog protein (hh). Associates with the smoothened protein (SMO) to transduce the hedgehog signal leading to the activation of wingless, decapentaplegic and patched itself. Participates in cell interactions that establish pattern within the segment and the imaginal disks during development. In the absence of HH, represses the constitutive signaling activity of smo through fused (FU). This chain is Protein patched, found in Drosophila melanogaster (Fruit fly).